Consider the following 261-residue polypeptide: Zinc finger protein 664 (261 aa).

9 consecutive C2H2-type zinc fingers follow at residues 3–25 (YKCPMCREFFSERADLFMHQKIH), 31–53 (HKCDKCDKGFFHISELHIHWRDH), 59–81 (YKCDDCVKDFSTTTKLNRHKKIH), 87–109 (YKCYECGKAFNWSSHLQIHMRVH), 115–137 (YVCSECGRGFSNSSNLCMHQRVH), 143–165 (FKCEECGKAFRHTSSLCMHQRVH), 171–193 (YKCYECGKAFSQSSSLCIHQRVH), 199–221 (YRCCGCGKAFSQSSSLCIHQRVH), and 227–249 (FKCDECGKAFSQSTSLCIHQRVH). K257 is covalently cross-linked (Glycyl lysine isopeptide (Lys-Gly) (interchain with G-Cter in SUMO2)).

This sequence belongs to the krueppel C2H2-type zinc-finger protein family.

It localises to the nucleus. Its function is as follows. May be involved in transcriptional regulation. This is Zinc finger protein 664 (Znf664) from Mus musculus (Mouse).